The following is a 408-amino-acid chain: Lysosome-associated membrane glycoprotein 3 (408 aa).

Residues 1–20 (MPGQTSAVAVLLCLAVILHG) form the signal peptide. The Lumenal segment spans residues 21 to 373 (YQIREKEFPE…IVDECLSDYT (353 aa)). N55 and N225 each carry an N-linked (GlcNAc...) asparagine glycan. Residues C230 and C267 are joined by a disulfide bond. N284 is a glycosylation site (N-linked (GlcNAc...) asparagine). A disulfide bond links C331 and C368. The chain crosses the membrane as a helical span at residues 374-394 (VVLPVVGIIVVVLCVVGLGIY). The Cytoplasmic segment spans residues 395-408 (KIRQRRQSSAYQRI).

Belongs to the LAMP family. In terms of assembly, monomer. Interacts with FURIN.

The protein localises to the cell surface. Its subcellular location is the lysosome membrane. It localises to the cytoplasmic vesicle membrane. It is found in the early endosome membrane. In terms of biological role, lysosomal membrane glycoprotein which plays a role in the unfolded protein response (UPR) that contributes to protein degradation and cell survival during proteasomal dysfunction. Plays a role in the process of fusion of the lysosome with the autophagosome, thereby modulating the autophagic process. Promotes hepatocellular lipogenesis through activation of the PI3K/Akt pathway. May also play a role in dendritic cell function and in adaptive immunity. This is Lysosome-associated membrane glycoprotein 3 (Lamp3) from Rattus norvegicus (Rat).